Consider the following 622-residue polypeptide: Polygalacturonase 1 beta-like protein 1 (622 aa).

A signal peptide spans 1 to 21 (MRKQFVFLLPFLSRLYHVVIA). The stretch at 118 to 121 (FSVY) is one FXXY 1 repeat. N-linked (GlcNAc...) asparagine glycosylation occurs at asparagine 125. FXXY repeat units follow at residues 126–129 (FTNY), 140–143 (FKKY), 154–157 (FRRY), 168–171 (FTGY), 182–185 (FNSY), 196–199 (FKNY), 210–213 (FKAY), 224–227 (FKTY), 239–242 (FTSY), 253–256 (FSSY), and 267–270 (FSNY). Residue asparagine 278 is glycosylated (N-linked (GlcNAc...) asparagine). 7 FXXY repeats span residues 281–284 (FKGY), 295–298 (FKSY), 309–312 (FLNY), 323–326 (FSSY), 337–340 (FVNY), 351–354 (FSGY), and 365–368 (FKTY). Asparagine 371 carries N-linked (GlcNAc...) asparagine glycosylation. FXXY repeat units follow at residues 374-377 (FKDY) and 384-387 (FAKY). N-linked (GlcNAc...) asparagine glycosylation is found at asparagine 388 and asparagine 461. Positions 407-621 (FFRESMLKEG…FENDMNWAIA (215 aa)) constitute a BURP domain.

In terms of tissue distribution, expressed in flowers and stems.

It is found in the secreted. Its subcellular location is the extracellular space. The protein resides in the apoplast. The protein localises to the cell wall. Its function is as follows. Involved in cell size determination. In Arabidopsis thaliana (Mouse-ear cress), this protein is Polygalacturonase 1 beta-like protein 1.